The primary structure comprises 43 residues: Protein PsbN (43 aa).

Residues 5–25 (TLISVFVASLVIGITAYAIFV) form a helical membrane-spanning segment.

It belongs to the PsbN family.

It localises to the plastid. It is found in the chloroplast thylakoid membrane. Functionally, may play a role in photosystem I and II biogenesis. In Cyanidioschyzon merolae (strain NIES-3377 / 10D) (Unicellular red alga), this protein is Protein PsbN.